The sequence spans 472 residues: uncharacterized protein (472 aa).

The protein resides in the mitochondrion. This is an uncharacterized protein from Saccharomyces cerevisiae (strain ATCC 204508 / S288c) (Baker's yeast).